The following is a 104-amino-acid chain: Chitin-binding protein 2 (104 aa).

As to quaternary structure, oligomer in an unreduced state. Post-translationally, glycosylated.

In terms of biological role, chitin-binding protein. Has antifungal activity against C.krusei, C.albicans, C.tropicalis and C.parapsilosis. Inhibits C.albicans by increasing cell membrane permeability and production of reactive oxygen species. Has no hemagglutinating activity. The chain is Chitin-binding protein 2 from Moringa oleifera (Horseradish tree).